The following is a 969-amino-acid chain: Integrator complex subunit 4 (969 aa).

8 HEAT repeats span residues 68–107 (AESV…TAGF), 147–185 (VSHR…VEAS), 192–230 (NAVA…RGLK), 231–265 (LQQA…SQLY), 279–315 (IRLV…LQVS), 371–407 (NLID…ARSS), 408–446 (APFA…NITL), and 448–486 (EDQL…CIQL). Positions 928–949 (RASNSTWGESTETVPSTESSTE) are enriched in low complexity. A disordered region spans residues 928-950 (RASNSTWGESTETVPSTESSTEG).

This sequence belongs to the Integrator subunit 4 family. As to quaternary structure, component of the Integrator complex, composed of core subunits INTS1, INTS2, INTS3, INTS4, INTS5, INTS6, INTS7, INTS8, INTS9/RC74, INTS10, INTS11/CPSF3L, INTS12, INTS13, INTS14 and INTS15. The core complex associates with protein phosphatase 2A subunits PPP2CA and PPP2R1A, to form the Integrator-PP2A (INTAC) complex. INTS4 is part of the RNA endonuclease subcomplex, composed of INTS4, INTS9, INTS11 and inositol hexakisphosphate (InsP6).

It localises to the nucleus. Its subcellular location is the cytoplasm. Functionally, component of the integrator complex, a multiprotein complex that terminates RNA polymerase II (Pol II) transcription in the promoter-proximal region of genes. The integrator complex provides a quality checkpoint during transcription elongation by driving premature transcription termination of transcripts that are unfavorably configured for transcriptional elongation: the complex terminates transcription by (1) catalyzing dephosphorylation of the C-terminal domain (CTD) of Pol II subunit POLR2A/RPB1 and SUPT5H/SPT5, (2) degrading the exiting nascent RNA transcript via endonuclease activity and (3) promoting the release of Pol II from bound DNA. The integrator complex is also involved in terminating the synthesis of non-coding Pol II transcripts, such as enhancer RNAs (eRNAs), small nuclear RNAs (snRNAs), telomerase RNAs and long non-coding RNAs (lncRNAs). The chain is Integrator complex subunit 4 (ints4) from Xenopus laevis (African clawed frog).